The chain runs to 788 residues: Ribonucleoside-diphosphate reductase subunit alpha (788 aa).

An ATP-cone domain is found at 2 to 92 (ITVVKRNGRI…LYDLYHKVSG (91 aa)). ATP-binding positions include K6, 12–18 (EPLDITK), and T52. T200 provides a ligand contact to GDP. C216 and C497 are disulfide-bonded. DTTP contacts are provided by residues 223–225 (DNI) and R253. GDP is bound at residue N424. The Proton acceptor role is filled by N424. C426 functions as the Cysteine radical intermediate in the catalytic mechanism. GDP contacts are provided by residues E428 and 661 to 663 (SSI). E428 serves as the catalytic Proton acceptor.

The protein belongs to the ribonucleoside diphosphate reductase large chain family. Tetramer of two alpha and two beta subunits.

It catalyses the reaction a 2'-deoxyribonucleoside 5'-diphosphate + [thioredoxin]-disulfide + H2O = a ribonucleoside 5'-diphosphate + [thioredoxin]-dithiol. Its activity is regulated as follows. Under complex allosteric control mediated by deoxynucleoside triphosphates and ATP binding to separate specificity and activation sites on the alpha subunit. The type of nucleotide bound at the specificity site determines substrate preference. It seems probable that ATP makes the enzyme reduce CDP and UDP, dGTP favors ADP reduction and dTTP favors GDP reduction. Stimulated by ATP and inhibited by dATP binding to the activity site. In terms of biological role, provides the precursors necessary for DNA synthesis. Catalyzes the biosynthesis of deoxyribonucleotides from the corresponding ribonucleotides. The polypeptide is Ribonucleoside-diphosphate reductase subunit alpha (nrdA) (Helicobacter pylori (strain ATCC 700392 / 26695) (Campylobacter pylori)).